A 362-amino-acid chain; its full sequence is Phosphoserine aminotransferase (362 aa).

Residue Arg-43 coordinates L-glutamate. Pyridoxal 5'-phosphate is bound by residues 77 to 78 (AT), Trp-103, Thr-153, Asp-173, and Gln-196. An N6-(pyridoxal phosphate)lysine modification is found at Lys-197. 238–239 (NT) is a pyridoxal 5'-phosphate binding site.

The protein belongs to the class-V pyridoxal-phosphate-dependent aminotransferase family. SerC subfamily. As to quaternary structure, homodimer. Requires pyridoxal 5'-phosphate as cofactor.

Its subcellular location is the cytoplasm. The enzyme catalyses O-phospho-L-serine + 2-oxoglutarate = 3-phosphooxypyruvate + L-glutamate. The catalysed reaction is 4-(phosphooxy)-L-threonine + 2-oxoglutarate = (R)-3-hydroxy-2-oxo-4-phosphooxybutanoate + L-glutamate. The protein operates within amino-acid biosynthesis; L-serine biosynthesis; L-serine from 3-phospho-D-glycerate: step 2/3. It participates in cofactor biosynthesis; pyridoxine 5'-phosphate biosynthesis; pyridoxine 5'-phosphate from D-erythrose 4-phosphate: step 3/5. Its function is as follows. Catalyzes the reversible conversion of 3-phosphohydroxypyruvate to phosphoserine and of 3-hydroxy-2-oxo-4-phosphonooxybutanoate to phosphohydroxythreonine. In Acidithiobacillus ferrooxidans (strain ATCC 23270 / DSM 14882 / CIP 104768 / NCIMB 8455) (Ferrobacillus ferrooxidans (strain ATCC 23270)), this protein is Phosphoserine aminotransferase.